Consider the following 357-residue polypeptide: UDP-N-acetylglucosamine--N-acetylmuramyl-(pentapeptide) pyrophosphoryl-undecaprenol N-acetylglucosamine transferase (357 aa).

UDP-N-acetyl-alpha-D-glucosamine is bound by residues 15–17, N124, R165, S194, and Q288; that span reads TGG.

It belongs to the glycosyltransferase 28 family. MurG subfamily.

The protein resides in the cell inner membrane. It carries out the reaction di-trans,octa-cis-undecaprenyl diphospho-N-acetyl-alpha-D-muramoyl-L-alanyl-D-glutamyl-meso-2,6-diaminopimeloyl-D-alanyl-D-alanine + UDP-N-acetyl-alpha-D-glucosamine = di-trans,octa-cis-undecaprenyl diphospho-[N-acetyl-alpha-D-glucosaminyl-(1-&gt;4)]-N-acetyl-alpha-D-muramoyl-L-alanyl-D-glutamyl-meso-2,6-diaminopimeloyl-D-alanyl-D-alanine + UDP + H(+). It functions in the pathway cell wall biogenesis; peptidoglycan biosynthesis. Its function is as follows. Cell wall formation. Catalyzes the transfer of a GlcNAc subunit on undecaprenyl-pyrophosphoryl-MurNAc-pentapeptide (lipid intermediate I) to form undecaprenyl-pyrophosphoryl-MurNAc-(pentapeptide)GlcNAc (lipid intermediate II). The protein is UDP-N-acetylglucosamine--N-acetylmuramyl-(pentapeptide) pyrophosphoryl-undecaprenol N-acetylglucosamine transferase of Trichormus variabilis (strain ATCC 29413 / PCC 7937) (Anabaena variabilis).